A 50-amino-acid chain; its full sequence is Large ribosomal subunit protein eL39 (50 aa).

The segment covering 1 to 12 has biased composition (basic residues); the sequence is MGKKSKAKKKRL. The tract at residues 1–21 is disordered; it reads MGKKSKAKKKRLGKLEKQNSR.

It belongs to the eukaryotic ribosomal protein eL39 family.

The polypeptide is Large ribosomal subunit protein eL39 (Haloquadratum walsbyi (strain DSM 16790 / HBSQ001)).